We begin with the raw amino-acid sequence, 271 residues long: Formamidopyrimidine-DNA glycosylase (271 aa).

Catalysis depends on Pro-2, which acts as the Schiff-base intermediate with DNA. Glu-3 acts as the Proton donor in catalysis. The Proton donor; for beta-elimination activity role is filled by Lys-58. The DNA site is built by His-92, Arg-111, and Lys-152. The FPG-type zinc finger occupies 237–271 (YVYGKVQKPCKICNNIITLIRQNGRSTYFCNACQN). Arg-261 acts as the Proton donor; for delta-elimination activity in catalysis.

Belongs to the FPG family. In terms of assembly, monomer. Zn(2+) serves as cofactor.

The enzyme catalyses Hydrolysis of DNA containing ring-opened 7-methylguanine residues, releasing 2,6-diamino-4-hydroxy-5-(N-methyl)formamidopyrimidine.. It catalyses the reaction 2'-deoxyribonucleotide-(2'-deoxyribose 5'-phosphate)-2'-deoxyribonucleotide-DNA = a 3'-end 2'-deoxyribonucleotide-(2,3-dehydro-2,3-deoxyribose 5'-phosphate)-DNA + a 5'-end 5'-phospho-2'-deoxyribonucleoside-DNA + H(+). Its function is as follows. Involved in base excision repair of DNA damaged by oxidation or by mutagenic agents. Acts as a DNA glycosylase that recognizes and removes damaged bases. Has a preference for oxidized purines, such as 7,8-dihydro-8-oxoguanine (8-oxoG). Has AP (apurinic/apyrimidinic) lyase activity and introduces nicks in the DNA strand. Cleaves the DNA backbone by beta-delta elimination to generate a single-strand break at the site of the removed base with both 3'- and 5'-phosphates. This chain is Formamidopyrimidine-DNA glycosylase, found in Wolbachia sp. subsp. Drosophila simulans (strain wRi).